We begin with the raw amino-acid sequence, 437 residues long: Regulator of phospholipase D SRF1 (437 aa).

The disordered stretch occupies residues 1–24 (MGDSNSSQEAYSDTTSTNASRIAD). Residues 1-267 (MGDSNSSQEA…LTSLLLDNQY (267 aa)) lie on the Cytoplasmic side of the membrane. A phosphoserine mark is found at S45 and S167. A helical membrane pass occupies residues 268-288 (LILGLRIFTGILSCISLALAI). Topologically, residues 289 to 308 (KIFQNSRSNNTISESKIGQQ) are extracellular. A glycan (N-linked (GlcNAc...) asparagine) is linked at N297. Residues 309-329 (PSTIMAICVNAVAIAYIIYIA) traverse the membrane as a helical segment. Topologically, residues 330–348 (HDEFAGKPVGLRNPLSKLK) are cytoplasmic. The helical transmembrane segment at 349-369 (LILLDLLFIIFSSANLALAFN) threads the bilayer. Over 370-403 (TRFDKEWVCTSIRRSNGSTYGYPKIPRICRKQEA) the chain is Extracellular. A glycan (N-linked (GlcNAc...) asparagine) is linked at N385. A helical membrane pass occupies residues 404–424 (LSAFLFVALFMWVITFSISIV). Residues 425 to 437 (RVVEKVSSITNRN) are Cytoplasmic-facing.

As to quaternary structure, interacts with SPO14.

It localises to the membrane. Functionally, regulator of phospholipase D (SPO14) which is required for SPO14 catalytic activity in mitotic cells. Essential to buffer the toxic effects of C16:0 platelet activating factor. The sequence is that of Regulator of phospholipase D SRF1 (SRF1) from Saccharomyces cerevisiae (strain ATCC 204508 / S288c) (Baker's yeast).